The primary structure comprises 849 residues: A-kinase anchor protein 4 (849 aa).

The propeptide occupies 1–188; that stretch reads MIAYCGTTTM…MAASKNTNNN (188 aa). Phosphoserine is present on residues Ser96, Ser130, Ser190, and Ser204. Residues 183–205 are compositionally biased toward polar residues; that stretch reads KNTNNNQSPSNPATKSPSNQRSV. A disordered region spans residues 183 to 210; the sequence is KNTNNNQSPSNPATKSPSNQRSVATPEG. Thr207 carries the post-translational modification Phosphothreonine. Phosphoserine occurs at positions 213, 226, and 271. The tract at residues 219–232 is PKA-RI and PKA-RII subunit binding domain; sequence FYVNRLSSLVIQMA. The residue at position 301 (Tyr301) is a Phosphotyrosine. A phosphoserine mark is found at Ser302, Ser341, Ser431, Ser442, Ser444, Ser463, Ser492, Ser497, and Ser504. Residues 335-344 form a PKA-RI-alpha subunit binding domain region; it reads YANQVASDMM. The residue at position 506 (Thr506) is a Phosphothreonine. Ser538 is subject to Phosphoserine. Ser583 is modified (phosphoserine; by STK33). Residues Ser628, Ser633, Ser652, and Ser702 each carry the phosphoserine modification.

It belongs to the AKAP110 family. As to quaternary structure, interacts with PRKAR1A and PRKAR2A. Interacts with ENO4. Interacts with QRICH2. In terms of processing, phosphorylated by STK33 during sperm flagella assembly. In terms of tissue distribution, expressed in the fibrous sheath of spermatozoa (at protein level). Expressed in step 1 to step 6 spermatids, abundance then increases during steps 8 to 12, abundance decreases thereafter.

It is found in the cell projection. It localises to the cilium. The protein localises to the flagellum. In terms of biological role, major structural component of sperm fibrous sheath. Plays a role in sperm motility. The protein is A-kinase anchor protein 4 of Mus musculus (Mouse).